We begin with the raw amino-acid sequence, 344 residues long: Heat-inducible transcription repressor HrcA (344 aa).

It belongs to the HrcA family.

Negative regulator of class I heat shock genes (grpE-dnaK-dnaJ and groELS operons). Prevents heat-shock induction of these operons. This chain is Heat-inducible transcription repressor HrcA, found in Moorella thermoacetica (strain ATCC 39073 / JCM 9320).